Here is a 156-residue protein sequence, read N- to C-terminus: MSDICWICNDVCDERNNFCGCNEEYKVVHIKCMQLWINYSKKKECNLCKTKYNIKKTYVSFKKWNWCFNDKKTTLFKIFFILFALVFIFLTITLSNDMANLVTGINDLICSIIFLIVYTVVMLTSICFSVFVVAIVVDFLLEAKEKNSFLTIREIV.

Residues 1–55 (MSDICWICNDVCDERNNFCGCNEEYKVVHIKCMQLWINYSKKKECNLCKTKYNIK) form an RING-CH-type zinc finger. The Cytoplasmic segment spans residues 1-73 (MSDICWICND…WNWCFNDKKT (73 aa)). Residues C5, C8, C19, C21, H29, C32, C45, and C48 each coordinate Zn(2+). A helical transmembrane segment spans residues 74–94 (TLFKIFFILFALVFIFLTITL). The Lumenal portion of the chain corresponds to 95–111 (SNDMANLVTGINDLICS). A helical membrane pass occupies residues 112–132 (IIFLIVYTVVMLTSICFSVFV). Residues 133–156 (VAIVVDFLLEAKEKNSFLTIREIV) lie on the Cytoplasmic side of the membrane.

It belongs to the poxviridae LAP protein family.

The protein localises to the host membrane. The protein resides in the host Golgi apparatus. Its subcellular location is the host trans-Golgi network membrane. It localises to the host early endosome membrane. It catalyses the reaction S-ubiquitinyl-[E2 ubiquitin-conjugating enzyme]-L-cysteine + [acceptor protein]-L-lysine = [E2 ubiquitin-conjugating enzyme]-L-cysteine + N(6)-ubiquitinyl-[acceptor protein]-L-lysine.. Functionally, E3 ubiquitin-protein ligase which promotes ubiquitination and subsequent degradation of host MHC-I and CD4 molecules, presumably to prevent lysis of infected cells by cytotoxic T-lymphocytes and NK cell. Binds target molecules through transmembrane interaction. The result of this ubiquitination is the enhancement of the endocytosis of the target chain and the delivery to the lysosome, where it is proteolytically destroyed. This is E3 ubiquitin-protein ligase LAP from Yaba-like disease virus (YLDV).